The primary structure comprises 189 residues: MSHLLVYDFMEHDLANVLIVVKPSTKSLVFVSLSGTKPKLLGDAKKFVSKVNSLSKNKGSIYTLKNKSILKSDDVAWLEQLSFDFLQILAGGIDSQTNIKCEYLLGTEFQKKVWETTKTIKAGATISYQQLAVLLGNPKAVRAIGSALAKNNIAVVIPCHRIIGSKGKLTGFRWGIELKESLLRQEQAI.

The DNA site is built by tyrosine 128 and arginine 142. Cysteine 159 (nucleophile; methyl group acceptor) is an active-site residue. Serine 165 is a binding site for DNA.

This sequence belongs to the MGMT family.

The protein localises to the nucleus. It catalyses the reaction a 6-O-methyl-2'-deoxyguanosine in DNA + L-cysteinyl-[protein] = S-methyl-L-cysteinyl-[protein] + a 2'-deoxyguanosine in DNA. The catalysed reaction is a 4-O-methyl-thymidine in DNA + L-cysteinyl-[protein] = a thymidine in DNA + S-methyl-L-cysteinyl-[protein]. Functionally, involved in the cellular defense against the biological effects of O6-methylguanine (O6-MeG) and O4-methylthymine (O4-MeT) in DNA. Repairs the methylated nucleobase in DNA by stoichiometrically transferring the methyl group to a cysteine residue in the enzyme. This is a suicide reaction: the enzyme is irreversibly inactivated. This is Methylated-DNA--protein-cysteine methyltransferase (MGT1) from Kluyveromyces lactis (strain ATCC 8585 / CBS 2359 / DSM 70799 / NBRC 1267 / NRRL Y-1140 / WM37) (Yeast).